Reading from the N-terminus, the 608-residue chain is Nuclear protein localization protein 4 homolog (608 aa).

N-acetylalanine is present on Ala2. At Lys179 the chain carries N6-acetyllysine. The MPN domain maps to 226-363 (IMFENHTVAD…ICRLSPDGHF (138 aa)). The RanBP2-type zinc-finger motif lies at 580–608 (TSAMWACQHCTFMNQPGTGHCEMCSLPRT).

The protein belongs to the NPL4 family. In terms of assembly, heterodimer with UFD1. The heterodimer binds ubiquitinated proteins. The heterodimer binds to VCP and inhibits Golgi membrane fusion. Interacts with ZFAND2B; probably through VCP.

Its subcellular location is the cytoplasm. The protein resides in the cytosol. It localises to the endoplasmic reticulum. The protein localises to the nucleus. It participates in protein degradation; proteasomal ubiquitin-dependent pathway. Functionally, the ternary complex containing UFD1, VCP and NPLOC4 binds ubiquitinated proteins and is necessary for the export of misfolded proteins from the ER to the cytoplasm, where they are degraded by the proteasome. The NPLOC4-UFD1-VCP complex regulates spindle disassembly at the end of mitosis and is necessary for the formation of a closed nuclear envelope. Acts as a negative regulator of type I interferon production via the complex formed with VCP and UFD1, which binds to RIGI and recruits RNF125 to promote ubiquitination and degradation of RIGI. The polypeptide is Nuclear protein localization protein 4 homolog (Nploc4) (Mus musculus (Mouse)).